The following is a 384-amino-acid chain: GTPase Obg (384 aa).

The Obg domain maps to 1-159 (MKFVDEVEIR…RPLKLELMLL (159 aa)). Residues 72-94 (NGMGKNCTGRRGNDIVLPVPPGT) are disordered. The region spanning 160–333 (ADVGLLGMPN…LCREVMSYLE (174 aa)) is the OBG-type G domain. GTP is bound by residues 166–173 (GMPNAGKS), 191–195 (FTTLI), 213–216 (DIPG), 283–286 (NKVD), and 314–316 (AAL). Positions 173 and 193 each coordinate Mg(2+). The tract at residues 358–384 (EEVLEEEMDDEDDDDDDDHDVEVIYQK) is disordered. A compositionally biased stretch (acidic residues) spans 360–377 (VLEEEMDDEDDDDDDDHD).

The protein belongs to the TRAFAC class OBG-HflX-like GTPase superfamily. OBG GTPase family. As to quaternary structure, monomer. It depends on Mg(2+) as a cofactor.

Its subcellular location is the cytoplasm. Its function is as follows. An essential GTPase which binds GTP, GDP and possibly (p)ppGpp with moderate affinity, with high nucleotide exchange rates and a fairly low GTP hydrolysis rate. Plays a role in control of the cell cycle, stress response, ribosome biogenesis and in those bacteria that undergo differentiation, in morphogenesis control. The sequence is that of GTPase Obg from Idiomarina loihiensis (strain ATCC BAA-735 / DSM 15497 / L2-TR).